A 1071-amino-acid polypeptide reads, in one-letter code: Ubiquitin carboxyl-terminal hydrolase 7 (1071 aa).

The interval 467–532 is disordered; it reads KARLQQEQQQ…MPTTPEIPPP (66 aa). The span at 471-480 shows a compositional bias: low complexity; sequence QQEQQQQQQQ. A compositionally biased stretch (polar residues) spans 481–495; the sequence is PDSQDSFSAKESSTK. Pro residues-rich tracts occupy residues 497-507 and 516-532; these read PEPPSWKPPDL and PPPPPVSMPTTPEIPPP. The 461-residue stretch at 609 to 1069 folds into the USP domain; the sequence is TGLRNLGNTC…DVYVLFYERV (461 aa). Catalysis depends on C618, which acts as the Nucleophile. The segment at 913–942 is disordered; it reads RMLGGSGKRSSSSTPFSTGGNDSNNSSDYK. Residues 920–932 are compositionally biased toward polar residues; it reads KRSSSSTPFSTGG. The Proton acceptor role is filled by H1014.

The protein belongs to the peptidase C19 family.

The protein resides in the cytoplasm. It catalyses the reaction Thiol-dependent hydrolysis of ester, thioester, amide, peptide and isopeptide bonds formed by the C-terminal Gly of ubiquitin (a 76-residue protein attached to proteins as an intracellular targeting signal).. Its function is as follows. Involved in the sorting of ubiquitinated cargo proteins at the multivesicular body (MVB). This Saccharomyces cerevisiae (strain ATCC 204508 / S288c) (Baker's yeast) protein is Ubiquitin carboxyl-terminal hydrolase 7 (UBP7).